We begin with the raw amino-acid sequence, 355 residues long: Blue-sensitive opsin P467 (355 aa).

At 1 to 36 the chain is on the extracellular side; sequence MNGTEGINFYVPLSNKTGLVRSPFEYPQYYLADPWK. N-linked (GlcNAc...) asparagine glycans are attached at residues Asn2 and Asn15. Residues 37-61 form a helical membrane-spanning segment; sequence FKVLSFYMFFLIAAGMPLNGLTLFV. The Cytoplasmic portion of the chain corresponds to 62 to 73; it reads TFQHKKLRQPLN. The chain crosses the membrane as a helical span at residues 74 to 98; sequence YILVNLAAANLVTVCCGFTVTFYAS. Topologically, residues 99 to 113 are extracellular; it reads WYAYFVFGPIGCAIE. Cys110 and Cys187 are oxidised to a cystine. A helical membrane pass occupies residues 114-133; sequence GFFATIGGQVALWSLVVLAI. At 134–152 the chain is on the cytoplasmic side; the sequence is ERYIVICKPMGNFRFSATH. A helical transmembrane segment spans residues 153–176; the sequence is AIMGIAFTWFMALACAGPPLFGWS. Residues 177–202 lie on the Extracellular side of the membrane; sequence RFIPEGMQCSCGPDYYTLNPDFHNES. The N-linked (GlcNAc...) asparagine glycan is linked to Asn200. A helical transmembrane segment spans residues 203–230; that stretch reads YVIYMFIVHFTVPMVVIFFSYGRLVCKV. Over 231 to 252 the chain is Cytoplasmic; the sequence is REAAAQQQESATTQKAEKEVTR. A helical membrane pass occupies residues 253-276; that stretch reads MVILMVLGFLLAWTPYAATAIWIF. The Extracellular segment spans residues 277 to 284; the sequence is TNRGAAFS. Residues 285 to 309 traverse the membrane as a helical segment; it reads VTFMTIPAFFSKSSSIYNPIIYVLL. At Lys296 the chain carries N6-(retinylidene)lysine. Topologically, residues 310 to 355 are cytoplasmic; it reads NKQFRNCMVTTICCGKNPFGDEDVSSSVSQSKTEVSSVSSSQVAPA. Positions 333–355 are disordered; the sequence is VSSSVSQSKTEVSSVSSSQVAPA. The segment covering 334 to 355 has biased composition (low complexity); sequence SSSVSQSKTEVSSVSSSQVAPA.

The protein belongs to the G-protein coupled receptor 1 family. Opsin subfamily. Post-translationally, phosphorylated on some or all of the serine and threonine residues present in the C-terminal region. As to expression, in this lizard the color pigments are found in the rod-shaped photoreceptor cells which have been derived from ancestral cone-like photoreceptors.

The protein resides in the membrane. Its function is as follows. Visual pigments are the light-absorbing molecules that mediate vision. They consist of an apoprotein, opsin, covalently linked to cis-retinal. The polypeptide is Blue-sensitive opsin P467 (Gekko gecko (Tokay gecko)).